The primary structure comprises 802 residues: ATP-dependent RNA helicase dbp4 (802 aa).

Residues 1 to 24 form a disordered region; it reads MAPINGSRNGKHSKPQRGGNLKRK. The span at 9–24 shows a compositional bias: basic residues; it reads NGKHSKPQRGGNLKRK. Residues 47-75 carry the Q motif motif; that stretch reads EQFTDLPLSEPTASGLASSHYKTLTDIQS. Residues 78–252 form the Helicase ATP-binding domain; it reads ISHALKGRDI…RLSLQDPEYV (175 aa). 91–98 lines the ATP pocket; sequence AKTGSGKT. The DEAD box signature appears at 200–203; that stretch reads DEAD. In terms of domain architecture, Helicase C-terminal spans 274–437; the sequence is PLPQKLDVLW…SIKDQLQNMC (164 aa). 3 disordered regions span residues 494-538, 589-614, and 685-802; these read GDDT…KYDR, DKDLDVGGSSSEDEEDADGTEKKGAK, and LAEE…GLLG. The segment covering 520–538 has biased composition (basic and acidic residues); sequence GEKKKTKKDETQVRTKYDR. The span at 685 to 704 shows a compositional bias: basic and acidic residues; that stretch reads LAEEAERTRQADLEDKEVAK. Residues 705 to 714 show a composition bias toward basic residues; that stretch reads QKKREKKEKR.

It belongs to the DEAD box helicase family. DDX10/DBP4 subfamily. In terms of assembly, interacts with the U3 and U14 snoRNAs. Associates with pre-ribosomal complexes.

Its subcellular location is the nucleus. The protein localises to the nucleolus. The enzyme catalyses ATP + H2O = ADP + phosphate + H(+). ATP-dependent RNA helicase required for ribosome biogenesis. Involved in the release of U14 snoRNA in pre-ribosomal complexes. Required for pre-rRNA cleavage at site A2. In Aspergillus niger (strain ATCC MYA-4892 / CBS 513.88 / FGSC A1513), this protein is ATP-dependent RNA helicase dbp4 (dbp4).